The primary structure comprises 499 residues: Probable malate:quinone oxidoreductase (499 aa).

This sequence belongs to the MQO family. FAD serves as cofactor.

The catalysed reaction is (S)-malate + a quinone = a quinol + oxaloacetate. It functions in the pathway carbohydrate metabolism; tricarboxylic acid cycle; oxaloacetate from (S)-malate (quinone route): step 1/1. This chain is Probable malate:quinone oxidoreductase, found in Exiguobacterium sp. (strain ATCC BAA-1283 / AT1b).